The following is a 513-amino-acid chain: MEVSVLMWVLLFYSLLGFQVTTARLDRNNFPSDFMFGTASSAYQYEGAVREDGKGPSTWDALTHMPGRIKDSSNGDVAVDQYHRYMEDIELMASLGLDAYRFSISWSRILPEGRGEINMAGIEYYNNLIDALLQNGIQPFVTLFHFDLPKALEDSYGGWLSPQIINDFEAYAEICFRAFGDRVKYWATVNEPNLFVPLGYTVGIFPPTRCAAPHANPLCMTGNCSSAEPYLAAHHVLLAHASAVEKYREKYQKIQGGSIGLVISAPWYEPLENSPEERSAVDRILSFNLRWFLDPIVFGDYPQEMRERLGSRLPSISSELSAKLRGSFDYMGINHYTTLYATSTPPLSPDHTQYLYPDSRVYLTGERHGVSIGERTGMDGLFVVPHGIQKIVEYVKEFYDNPTIIIAENGYPESEESSSTLQENLNDVRRIRFHGDCLSYLSAAIKNGSDVRGYFVWSLLDNFEWAFGYTIRFGLYHVDFISDQKRYPKLSAQWFRQFLQHDDQGSIRSSSSI.

The N-terminal stretch at 1–23 is a signal peptide; sequence MEVSVLMWVLLFYSLLGFQVTTA. Residues Gln44, His145, and 190–191 contribute to the a beta-D-glucoside site; that span reads NE. Glu191 functions as the Proton donor in the catalytic mechanism. Cys210 and Cys219 are oxidised to a cystine. The N-linked (GlcNAc...) asparagine glycan is linked to Asn223. Positions 336 and 408 each coordinate a beta-D-glucoside. Glu408 serves as the catalytic Nucleophile. Asn447 carries N-linked (GlcNAc...) asparagine glycosylation. A beta-D-glucoside-binding positions include Trp457, 464–465, and Phe473; that span reads EW.

The protein belongs to the glycosyl hydrolase 1 family. In terms of assembly, homodimer. Glycosylated.

It catalyses the reaction 4-O-(beta-D-glucosyl)-(E)-coniferol + H2O = (E)-coniferol + D-glucose. Inhibited by glucono-1,5-lactone, but not by bromoconduritol or conduritol B epoxide. Involved in the release of monolignols for lignin biosynthesis. Unable to hydrolyze 4-nitrophenyl beta-cellobioside or alpha-linked methylumbelliferyl glucoside. The chain is Coniferin beta-glucosidase from Pinus contorta (Shore pine).